A 193-amino-acid polypeptide reads, in one-letter code: Cysteine and glycine-rich protein 2 (193 aa).

The LIM zinc-binding 1 domain occupies 10-61 (CGACGRTVYHAEEVQCDGRTFHRCCFLCMVCRKNLDSTTVAIHDEEIYCKSC). Residues 64 to 69 (KKYGPK) carry the Nuclear localization signal motif. Residue Lys91 forms a Glycyl lysine isopeptide (Lys-Gly) (interchain with G-Cter in SUMO2) linkage. N6-acetyllysine occurs at positions 112 and 131. An LIM zinc-binding 2 domain is found at 119-170 (CSRCGDSVYAAEKIIGAGKPWHKNCFRCAKCGKSLESTTLTEKEGEIYCKGC). Lys137 is modified (N6-acetyllysine; alternate). Lys137 is modified (N6-succinyllysine; alternate). Position 161 is an N6-acetyllysine (Lys161).

As to quaternary structure, interacts with KAT14. The LIM domain 1 is necessary and sufficient for this interaction. Interacts with GLRX3. As to expression, highly expressed in the aorta; weakly found in the kidney, thymus, and intestine. Barely detectable in brain, testis, esophagus, lung, liver, aortic adventitia, vena cava, or uterus; not present in heart and skeletal muscle.

It is found in the nucleus. Its function is as follows. Drastically down-regulated in response to PDGF-BB or cell injury, that promote smooth muscle cell proliferation and dedifferentiation. Seems to play a role in the development of the embryonic vascular system. In Rattus norvegicus (Rat), this protein is Cysteine and glycine-rich protein 2 (Csrp2).